Consider the following 569-residue polypeptide: Paxillin-B (569 aa).

The LD motif 1 motif lies at 10–18; it reads DLDLLLADL. Residues 62–78 show a composition bias toward polar residues; it reads QPQTVQTISTPAPKNHN. The segment at 62 to 103 is disordered; it reads QPQTVQTISTPAPKNHNTTTTTASFSVSSQPAPQPPQQSQQI. The span at 79 to 102 shows a compositional bias: low complexity; that stretch reads TTTTTASFSVSSQPAPQPPQQSQQ. The LD motif 2 signature appears at 106 to 112; that stretch reads LDDLDEL. Residues 129 to 311 are disordered; it reads TTPEEHITHA…SPKVVHGDDL (183 aa). A compositionally biased stretch (low complexity) spans 150–161; it reads NTSSTNSASSLS. Polar residues-rich tracts occupy residues 162 to 188 and 196 to 206; these read RPNN…TTKK and TLETTSGNNVY. Residues 207–217 are compositionally biased toward low complexity; that stretch reads SSQPSQSQPQP. Residues 232–239 carry the LD motif 3 motif; it reads LDELLKGL. Positions 258 to 272 are enriched in basic residues; the sequence is HQHHHQHQHHHHHNP. Over residues 273–301 the composition is skewed to low complexity; the sequence is NHNQTQTVTTQINIGRTNTPNNNNNNNTN. Residues 311-318 carry the LD motif 4 motif; that stretch reads LDNLLNNL. LIM zinc-binding domains are found at residues 334 to 391, 393 to 452, 453 to 510, and 511 to 569; these read GTCG…QELF, ARCA…TFAV, RCGG…QQAG, and SVCS…KLFA.

Belongs to the paxillin family. As to expression, expressed in the upper and lower cup of the fruiting body.

The protein resides in the cytoplasm. Its subcellular location is the cell cortex. It localises to the cell projection. The protein localises to the filopodium. It is found in the cell junction. The protein resides in the focal adhesion. Its subcellular location is the cytoskeleton. Required for cell-substrate adhesion, cell sorting, slug migration, and cell differentiation. May function upstream of limB. The protein is Paxillin-B (paxB) of Dictyostelium discoideum (Social amoeba).